Reading from the N-terminus, the 282-residue chain is 4-hydroxy-3-methylbut-2-enyl diphosphate reductase (282 aa).

C12 lines the [4Fe-4S] cluster pocket. Residues H40 and H72 each contribute to the (2E)-4-hydroxy-3-methylbut-2-enyl diphosphate site. Residues H40 and H72 each contribute to the dimethylallyl diphosphate site. Isopentenyl diphosphate-binding residues include H40 and H72. C94 provides a ligand contact to [4Fe-4S] cluster. H122 contributes to the (2E)-4-hydroxy-3-methylbut-2-enyl diphosphate binding site. H122 contacts dimethylallyl diphosphate. H122 is an isopentenyl diphosphate binding site. The active-site Proton donor is E124. A (2E)-4-hydroxy-3-methylbut-2-enyl diphosphate-binding site is contributed by T160. C188 is a binding site for [4Fe-4S] cluster. S216, N218, and S260 together coordinate (2E)-4-hydroxy-3-methylbut-2-enyl diphosphate. S216, N218, and S260 together coordinate dimethylallyl diphosphate. Residues S216, N218, and S260 each coordinate isopentenyl diphosphate.

It belongs to the IspH family. [4Fe-4S] cluster is required as a cofactor.

The catalysed reaction is isopentenyl diphosphate + 2 oxidized [2Fe-2S]-[ferredoxin] + H2O = (2E)-4-hydroxy-3-methylbut-2-enyl diphosphate + 2 reduced [2Fe-2S]-[ferredoxin] + 2 H(+). It catalyses the reaction dimethylallyl diphosphate + 2 oxidized [2Fe-2S]-[ferredoxin] + H2O = (2E)-4-hydroxy-3-methylbut-2-enyl diphosphate + 2 reduced [2Fe-2S]-[ferredoxin] + 2 H(+). It participates in isoprenoid biosynthesis; dimethylallyl diphosphate biosynthesis; dimethylallyl diphosphate from (2E)-4-hydroxy-3-methylbutenyl diphosphate: step 1/1. Its pathway is isoprenoid biosynthesis; isopentenyl diphosphate biosynthesis via DXP pathway; isopentenyl diphosphate from 1-deoxy-D-xylulose 5-phosphate: step 6/6. Catalyzes the conversion of 1-hydroxy-2-methyl-2-(E)-butenyl 4-diphosphate (HMBPP) into a mixture of isopentenyl diphosphate (IPP) and dimethylallyl diphosphate (DMAPP). Acts in the terminal step of the DOXP/MEP pathway for isoprenoid precursor biosynthesis. This is 4-hydroxy-3-methylbut-2-enyl diphosphate reductase from Geobacter sulfurreducens (strain ATCC 51573 / DSM 12127 / PCA).